The chain runs to 149 residues: Calmodulin-1 (149 aa).

Ala2 is subject to N-acetylalanine. EF-hand domains lie at 8–43 (EQIAEFKEAFSLFDKDGDGTITTKELGTVMRSLGQN), 44–79 (PTEAELQDMINEVDADGNGTIDFPEFLTMMARKMKD), 81–116 (DSEEEIREAFRVFDKDGNGFISAAELRHVMTNLGEK), and 117–149 (LTDEEVDEMIREADIDGDGQVNYEEFVTMMTSK). Ca(2+) is bound by residues Asp21, Asp23, Asp25, Thr27, Glu32, Asp57, Asp59, Asn61, Thr63, Glu68, Asp94, Asp96, Asn98, and Glu105. Position 116 is an N6,N6,N6-trimethyllysine (Lys116). 5 residues coordinate Ca(2+): Asp130, Asp132, Asp134, Gln136, and Glu141.

This sequence belongs to the calmodulin family.

In terms of biological role, calmodulin mediates the control of a large number of enzymes, ion channels and other proteins by Ca(2+). Among the enzymes to be stimulated by the calmodulin-Ca(2+) complex are a number of protein kinases and phosphatases. This chain is Calmodulin-1, found in Branchiostoma floridae (Florida lancelet).